The primary structure comprises 502 residues: Potassium channel KAT3 (502 aa).

Residues 1-67 (MPRSSRMNLW…PYDPRYKVWE (67 aa)) lie on the Cytoplasmic side of the membrane. A helical membrane pass occupies residues 68–88 (TFLIILVVYSAWICPLEFAFL). Residues 89–95 (RYLPSAP) lie on the Extracellular side of the membrane. Residues 96-116 (FVVDDVVNGFFAVDIMLTFFV) form a helical membrane-spanning segment. Over 117 to 138 (PFVDKKSYLLVNDPKKIAVRYL) the chain is Cytoplasmic. A helical transmembrane segment spans residues 139-159 (SSWFVFDVCSTVPFHSISLLF). Residues 160-169 (NEHGHDLGFK) are Extracellular-facing. Residues 170 to 190 (FLNVLRLWRLRRVSSMFARLE) traverse the membrane as a helical; Voltage-sensor segment. At 191–204 (KDIRFNYAVIRCTK) the chain is on the cytoplasmic side. A helical membrane pass occupies residues 205-225 (LISVTLFAIHCAGCINYLIAD). Residues 226 to 252 (RYPDPRRTWIGAVMPNFREDGLWIRYV) lie on the Extracellular side of the membrane. The pore-forming intramembrane region spans 253-272 (TAMYWSITTLTTTGYGDLHA). At 273–276 (ENAR) the chain is on the extracellular side. The helical transmembrane segment at 277 to 297 (EMLFGICYMLFNLWLTAYLIG) threads the bilayer. The Cytoplasmic portion of the chain corresponds to 298 to 502 (NMTNLVVHST…IRSNLQQVNV (205 aa)). A nucleoside 3',5'-cyclic phosphate is bound at residue 381 to 500 (LFKGVSSRFI…DIIRSNLQQV (120 aa)).

The protein belongs to the potassium channel family. Plant (TC 1.A.1.4) subfamily.

The protein resides in the membrane. Probable inward-rectifying potassium channel. Assuming opened or closed conformations in response to the voltage difference across the membrane, the channel is activated by hyperpolarization. This chain is Potassium channel KAT3, found in Oryza sativa subsp. japonica (Rice).